The chain runs to 116 residues: Large ribosomal subunit protein uL22c (116 aa).

The protein belongs to the universal ribosomal protein uL22 family. Part of the 50S ribosomal subunit.

The protein localises to the plastid. It is found in the chloroplast. In terms of biological role, this protein binds specifically to 23S rRNA. Its function is as follows. The globular domain of the protein is located near the polypeptide exit tunnel on the outside of the subunit, while an extended beta-hairpin is found that lines the wall of the exit tunnel in the center of the 70S ribosome. The sequence is that of Large ribosomal subunit protein uL22c (rpl22) from Psilotum nudum (Whisk fern).